A 68-amino-acid polypeptide reads, in one-letter code: Large ribosomal subunit protein uL29 (68 aa).

The protein belongs to the universal ribosomal protein uL29 family.

This is Large ribosomal subunit protein uL29 from Limosilactobacillus fermentum (strain NBRC 3956 / LMG 18251) (Lactobacillus fermentum).